The following is a 361-amino-acid chain: Epi-isozizaene synthase (361 aa).

The Mg(2+) site is built by Asp99, Asp103, Asn240, Ser244, and Glu248. The short motif at 99 to 103 (DDRHD) is the DDXXD motif element.

The protein belongs to the terpene synthase family. Requires Mg(2+) as cofactor. Mn(2+) serves as cofactor. Fe(3+) is required as a cofactor.

It carries out the reaction (2E,6E)-farnesyl diphosphate = (+)-epi-isozizaene + diphosphate. It functions in the pathway sesquiterpene biosynthesis; epi-isozizaene biosynthesis. In terms of biological role, catalyzes the cyclization of farnesyl diphosphate (FPP) to the sesquiterpene epi-isozizaene. The polypeptide is Epi-isozizaene synthase (cyc1) (Streptomyces coelicolor (strain ATCC BAA-471 / A3(2) / M145)).